The primary structure comprises 284 residues: Ubiquitin thioesterase otubain-like (284 aa).

Residues glycine 77–lysine 274 enclose the OTU domain. Aspartate 85 is a catalytic residue. The active-site Nucleophile is cysteine 88. Residue isoleucine 176 participates in substrate binding. Active-site residues include histidine 245 and histidine 267.

It belongs to the peptidase C65 family.

It catalyses the reaction Thiol-dependent hydrolysis of ester, thioester, amide, peptide and isopeptide bonds formed by the C-terminal Gly of ubiquitin (a 76-residue protein attached to proteins as an intracellular targeting signal).. Its function is as follows. Hydrolase that can remove conjugated ubiquitin from proteins and plays an important regulatory role at the level of protein turnover by preventing degradation. Specifically cleaves 'Lys-48'-linked polyubiquitin. The sequence is that of Ubiquitin thioesterase otubain-like (otub-1) from Caenorhabditis elegans.